Consider the following 578-residue polypeptide: Frizzled-2 (578 aa).

An N-terminal signal peptide occupies residues M1–A17. Over L18–W236 the chain is Extracellular. An FZ domain is found at G20–P144. 5 disulfides stabilise this stretch: C25–C86, C33–C79, C70–C108, C97–C141, and C101–C125. N-linked (GlcNAc...) asparagine glycosylation is present at N39. The tract at residues G138–P175 is disordered. Positions K150–N159 are enriched in basic residues. Residues Q160–N169 are compositionally biased toward low complexity. N-linked (GlcNAc...) asparagine glycosylation occurs at N213. Residues M237–I257 form a helical membrane-spanning segment. The Cytoplasmic portion of the chain corresponds to E258–P268. A helical membrane pass occupies residues I269–V289. Residues G290–C312 are Extracellular-facing. The chain crosses the membrane as a helical span at residues F313 to L333. Residues S334–S354 lie on the Cytoplasmic side of the membrane. Residues F355 to F375 form a helical membrane-spanning segment. Residues N376–R398 lie on the Extracellular side of the membrane. The chain crosses the membrane as a helical span at residues I399 to G419. Over F420 to K449 the chain is Cytoplasmic. Residues I450–Y470 traverse the membrane as a helical segment. Topologically, residues E471–L497 are extracellular. Residues I498–V518 form a helical membrane-spanning segment. Residues C519–L578 lie on the Cytoplasmic side of the membrane. The short motif at K522–W527 is the Lys-Thr-X-X-X-Trp motif, mediates interaction with the PDZ domain of Dvl family members element. Positions S556–S558 match the PDZ-binding motif.

Belongs to the G-protein coupled receptor Fz/Smo family. Expressed in two pairs of head neurons and throughout the pharynx.

It is found in the cell membrane. Receptor for Wnt proteins. Most frizzled receptors are coupled to the beta-catenin canonical signaling pathway, which leads to the activation of disheveled proteins, inhibition of gsk-3 kinase, nuclear accumulation of beta-catenin and activation of Wnt target genes. A second signaling pathway involving PKC and calcium fluxes has been seen for some family members, but it is not yet clear if it represents a distinct pathway or if it can be integrated in the canonical pathway, as PKC seems to be required for Wnt-mediated inactivation of gsk-3 kinase. Both pathways seem to involve interactions with G-proteins. Required for the migration and axon formation and guidance of different neuronal cell types including canal-associated neurons (CAN), hermaphrodite-specific neurons (HSN), anterior lateral microtubule neurons (ALM), and the right Q neuroblast (QR) and its descendants. Directs ALM migration through frizzled protein mom-5 and Wnt ligands cwn-1, cwn-2 and egl-20. May act redundantly with mom-5 to direct CAN migration. Plays a role in the organization of head ganglion cells. Probably by acting as a receptor for Wnt ligand cwn-2, plays a role in the positioning of the nerve ring and may in addition positively regulate the neurite outgrowth of RME GABAergic motor neurons along the anterior-posterior axis of the body. The protein is Frizzled-2 of Caenorhabditis elegans.